Reading from the N-terminus, the 264-residue chain is O-methyltransferase resE (264 aa).

S-adenosyl-L-methionine is bound by residues Gln97 and His142.

It belongs to the methyltransferase superfamily.

It carries out the reaction desmethylrestrictinol + S-adenosyl-L-methionine = restrictinol + S-adenosyl-L-homocysteine + H(+). The protein operates within antifungal biosynthesis. In terms of biological role, O-methyltransferase; part of the gene cluster that mediates the biosynthesis of the tetrahydropyranyl antifungal agent restricticin that acts as an inhibitor of CYP51 and blocks the ergosterol biosynthesis. Within the pathway, resE uses S-adenosylmethionine to methylate position C4 of desmethylrestrictinol to produce restrictinol. The highly reducing polyketide synthase resH, the short chain dehydrogenase resG, the cyclase resF, the FAD-dependent monooxygenase resA and the enoylreductase resD are required to generate the first stable intermediate desmethylrestrictinol. ResH with resD biosynthesize the first polyketide chain intermediate that is reduced by resG, followed by epoxidation by resA before 6-endo cyclization via epoxide opening by resF leads to desmethylrestrictinol. The methyltransferase resE then catalyzes the C4 O-methylation of desmethylrestrictinol to produce restrictinol, and the nonribosomal peptide synthetase resC catalyzes the C3 esterification of restrictinol with glycine that leads to restricticin. This chain is O-methyltransferase resE, found in Aspergillus sclerotiorum.